A 563-amino-acid chain; its full sequence is Arginine--tRNA ligase (563 aa).

Positions 123–133 match the 'HIGH' region motif; it reads PNIAKDMHVGH.

Belongs to the class-I aminoacyl-tRNA synthetase family. Monomer.

The protein localises to the cytoplasm. It catalyses the reaction tRNA(Arg) + L-arginine + ATP = L-arginyl-tRNA(Arg) + AMP + diphosphate. The protein is Arginine--tRNA ligase (argS) of Chlamydia trachomatis serovar D (strain ATCC VR-885 / DSM 19411 / UW-3/Cx).